A 350-amino-acid polypeptide reads, in one-letter code: Phenylalanine--tRNA ligase alpha subunit (350 aa).

A Mg(2+)-binding site is contributed by E271.

It belongs to the class-II aminoacyl-tRNA synthetase family. Phe-tRNA synthetase alpha subunit type 1 subfamily. Tetramer of two alpha and two beta subunits. Mg(2+) is required as a cofactor.

Its subcellular location is the cytoplasm. The enzyme catalyses tRNA(Phe) + L-phenylalanine + ATP = L-phenylalanyl-tRNA(Phe) + AMP + diphosphate + H(+). The chain is Phenylalanine--tRNA ligase alpha subunit from Paracidovorax citrulli (strain AAC00-1) (Acidovorax citrulli).